A 442-amino-acid chain; its full sequence is 5'-deoxyadenosine deaminase (442 aa).

Positions 72 and 74 each coordinate Zn(2+). The substrate site is built by Glu101 and His193. His220 contributes to the Zn(2+) binding site. 2 residues coordinate substrate: Glu223 and Asp309. Asp309 serves as a coordination point for Zn(2+).

The protein belongs to the metallo-dependent hydrolases superfamily. MTA/SAH deaminase family. In terms of assembly, homotetramer. The cofactor is Zn(2+).

The catalysed reaction is 5'-deoxyadenosine + H2O + H(+) = 5'-deoxyinosine + NH4(+). The enzyme catalyses S-adenosyl-L-homocysteine + H2O + H(+) = S-inosyl-L-homocysteine + NH4(+). It carries out the reaction S-methyl-5'-thioadenosine + H2O + H(+) = S-methyl-5'-thioinosine + NH4(+). It catalyses the reaction adenosine + H2O + H(+) = inosine + NH4(+). It functions in the pathway amino-acid biosynthesis; S-adenosyl-L-methionine biosynthesis. In terms of biological role, catalyzes the deamination of three SAM-derived enzymatic products, namely 5'-deoxyadenosine, S-adenosyl-L-homocysteine, and 5'-methylthioadenosine, to produce the inosine analogs. Can also deaminate adenosine. The preferred substrate for this enzyme is 5'-deoxyadenosine, but all these substrates are efficiently deaminated. Likely functions in a S-adenosyl-L-methionine (SAM) recycling pathway from S-adenosyl-L-homocysteine (SAH) produced from SAM-dependent methylation reactions. May also be involved in the recycling of 5'-deoxyadenosine, whereupon the 5'-deoxyribose moiety of 5'-deoxyinosine is further metabolized to deoxyhexoses used for the biosynthesis of aromatic amino acids in methanogens. The protein is 5'-deoxyadenosine deaminase of Methanoregula boonei (strain DSM 21154 / JCM 14090 / 6A8).